Consider the following 364-residue polypeptide: tRNA-specific 2-thiouridylase MnmA 1 (364 aa).

Residues 10-17 (GMSGGVDS) and methionine 36 contribute to the ATP site. Catalysis depends on cysteine 106, which acts as the Nucleophile. A disulfide bridge connects residues cysteine 106 and cysteine 204. Glycine 130 is a binding site for ATP. Positions 154–156 (KDQ) are interaction with tRNA. Cysteine 204 acts as the Cysteine persulfide intermediate in catalysis. Residues 310–311 (RY) are interaction with tRNA.

This sequence belongs to the MnmA/TRMU family.

Its subcellular location is the cytoplasm. It carries out the reaction S-sulfanyl-L-cysteinyl-[protein] + uridine(34) in tRNA + AH2 + ATP = 2-thiouridine(34) in tRNA + L-cysteinyl-[protein] + A + AMP + diphosphate + H(+). Catalyzes the 2-thiolation of uridine at the wobble position (U34) of tRNA, leading to the formation of s(2)U34. The polypeptide is tRNA-specific 2-thiouridylase MnmA 1 (Thermoanaerobacter pseudethanolicus (strain ATCC 33223 / 39E) (Clostridium thermohydrosulfuricum)).